The chain runs to 448 residues: N-succinylarginine dihydrolase (448 aa).

Residues 19–28, Asn-110, and 137–138 contribute to the substrate site; these read AGLSYGNVAS and HR. The active site involves Glu-174. Residue Arg-214 participates in substrate binding. The active site involves His-250. The substrate site is built by Asp-252 and Asn-364. The Nucleophile role is filled by Cys-370.

This sequence belongs to the succinylarginine dihydrolase family. As to quaternary structure, homodimer.

The enzyme catalyses N(2)-succinyl-L-arginine + 2 H2O + 2 H(+) = N(2)-succinyl-L-ornithine + 2 NH4(+) + CO2. It participates in amino-acid degradation; L-arginine degradation via AST pathway; L-glutamate and succinate from L-arginine: step 2/5. Functionally, catalyzes the hydrolysis of N(2)-succinylarginine into N(2)-succinylornithine, ammonia and CO(2). In Pseudoalteromonas translucida (strain TAC 125), this protein is N-succinylarginine dihydrolase.